We begin with the raw amino-acid sequence, 96 residues long: Large ribosomal subunit protein bL27 (96 aa).

Positions 1–10 are excised as a propeptide; that stretch reads MLLKLNIQLF.

It belongs to the bacterial ribosomal protein bL27 family. Post-translationally, the N-terminus is cleaved by ribosomal processing cysteine protease Prp.

The sequence is that of Large ribosomal subunit protein bL27 from Phytoplasma mali (strain AT).